Here is a 454-residue protein sequence, read N- to C-terminus: Bifunctional protein GlmU (454 aa).

A pyrophosphorylase region spans residues methionine 1–arginine 231. UDP-N-acetyl-alpha-D-glucosamine is bound by residues leucine 11 to glycine 14, lysine 25, glutamine 78, glycine 83 to threonine 84, tyrosine 106 to aspartate 108, glycine 143, glutamate 157, asparagine 172, and asparagine 229. Aspartate 108 is a Mg(2+) binding site. Asparagine 229 contributes to the Mg(2+) binding site. The segment at alanine 232–aspartate 252 is linker. The interval glycine 253–asparagine 454 is N-acetyltransferase. Residues arginine 318 and lysine 336 each contribute to the UDP-N-acetyl-alpha-D-glucosamine site. Residue histidine 348 is the Proton acceptor of the active site. Residues tyrosine 351 and asparagine 362 each coordinate UDP-N-acetyl-alpha-D-glucosamine. Acetyl-CoA is bound by residues alanine 365, asparagine 371–tyrosine 372, serine 390, serine 408, and arginine 425.

It in the N-terminal section; belongs to the N-acetylglucosamine-1-phosphate uridyltransferase family. In the C-terminal section; belongs to the transferase hexapeptide repeat family. Homotrimer. It depends on Mg(2+) as a cofactor.

It localises to the cytoplasm. The enzyme catalyses alpha-D-glucosamine 1-phosphate + acetyl-CoA = N-acetyl-alpha-D-glucosamine 1-phosphate + CoA + H(+). It carries out the reaction N-acetyl-alpha-D-glucosamine 1-phosphate + UTP + H(+) = UDP-N-acetyl-alpha-D-glucosamine + diphosphate. It functions in the pathway nucleotide-sugar biosynthesis; UDP-N-acetyl-alpha-D-glucosamine biosynthesis; N-acetyl-alpha-D-glucosamine 1-phosphate from alpha-D-glucosamine 6-phosphate (route II): step 2/2. It participates in nucleotide-sugar biosynthesis; UDP-N-acetyl-alpha-D-glucosamine biosynthesis; UDP-N-acetyl-alpha-D-glucosamine from N-acetyl-alpha-D-glucosamine 1-phosphate: step 1/1. The protein operates within bacterial outer membrane biogenesis; LPS lipid A biosynthesis. Catalyzes the last two sequential reactions in the de novo biosynthetic pathway for UDP-N-acetylglucosamine (UDP-GlcNAc). The C-terminal domain catalyzes the transfer of acetyl group from acetyl coenzyme A to glucosamine-1-phosphate (GlcN-1-P) to produce N-acetylglucosamine-1-phosphate (GlcNAc-1-P), which is converted into UDP-GlcNAc by the transfer of uridine 5-monophosphate (from uridine 5-triphosphate), a reaction catalyzed by the N-terminal domain. This chain is Bifunctional protein GlmU, found in Cereibacter sphaeroides (strain ATCC 17025 / ATH 2.4.3) (Rhodobacter sphaeroides).